Consider the following 178-residue polypeptide: Peptide deformylase (178 aa).

2 residues coordinate Fe cation: C96 and H138. Residue E139 is part of the active site. Position 142 (H142) interacts with Fe cation.

The protein belongs to the polypeptide deformylase family. Requires Fe(2+) as cofactor.

It catalyses the reaction N-terminal N-formyl-L-methionyl-[peptide] + H2O = N-terminal L-methionyl-[peptide] + formate. Functionally, removes the formyl group from the N-terminal Met of newly synthesized proteins. Requires at least a dipeptide for an efficient rate of reaction. N-terminal L-methionine is a prerequisite for activity but the enzyme has broad specificity at other positions. The chain is Peptide deformylase from Bartonella tribocorum (strain CIP 105476 / IBS 506).